Reading from the N-terminus, the 152-residue chain is Transcriptional regulator MraZ (152 aa).

SpoVT-AbrB domains lie at 5–52 and 81–124; these read ATMV…TLPA and ASEC…DEQT.

Belongs to the MraZ family. As to quaternary structure, forms oligomers.

It localises to the cytoplasm. Its subcellular location is the nucleoid. Its function is as follows. Negatively regulates its own expression and that of the subsequent genes in the proximal part of the division and cell wall (dcw) gene cluster. Acts by binding directly to DNA. May also regulate the expression of genes outside the dcw cluster. This is Transcriptional regulator MraZ from Yersinia enterocolitica serotype O:8 / biotype 1B (strain NCTC 13174 / 8081).